The primary structure comprises 399 residues: Enoyl-[acyl-carrier-protein] reductase [NADH] (399 aa).

Residues 48 to 53 (GASTGY), 74 to 75 (FE), 111 to 112 (DA), and 139 to 140 (LA) each bind NAD(+). A substrate-binding site is contributed by Tyr-225. Tyr-235 functions as the Proton donor in the catalytic mechanism. NAD(+)-binding positions include Lys-244 and 274–276 (VVT).

Belongs to the TER reductase family. In terms of assembly, monomer.

The catalysed reaction is a 2,3-saturated acyl-[ACP] + NAD(+) = a (2E)-enoyl-[ACP] + NADH + H(+). It participates in lipid metabolism; fatty acid biosynthesis. Involved in the final reduction of the elongation cycle of fatty acid synthesis (FAS II). Catalyzes the reduction of a carbon-carbon double bond in an enoyl moiety that is covalently linked to an acyl carrier protein (ACP). The protein is Enoyl-[acyl-carrier-protein] reductase [NADH] of Yersinia pestis bv. Antiqua (strain Antiqua).